A 364-amino-acid chain; its full sequence is tRNA N6-adenosine threonylcarbamoyltransferase (364 aa).

Residues histidine 118 and histidine 122 each coordinate Fe cation. Residues 140-144 (LVSGG), aspartate 173, glycine 186, and asparagine 288 each bind substrate. Aspartate 316 provides a ligand contact to Fe cation.

This sequence belongs to the KAE1 / TsaD family. Requires Fe(2+) as cofactor.

The protein localises to the cytoplasm. It carries out the reaction L-threonylcarbamoyladenylate + adenosine(37) in tRNA = N(6)-L-threonylcarbamoyladenosine(37) in tRNA + AMP + H(+). Its function is as follows. Required for the formation of a threonylcarbamoyl group on adenosine at position 37 (t(6)A37) in tRNAs that read codons beginning with adenine. Is involved in the transfer of the threonylcarbamoyl moiety of threonylcarbamoyl-AMP (TC-AMP) to the N6 group of A37, together with TsaE and TsaB. TsaD likely plays a direct catalytic role in this reaction. In Cereibacter sphaeroides (strain ATCC 17023 / DSM 158 / JCM 6121 / CCUG 31486 / LMG 2827 / NBRC 12203 / NCIMB 8253 / ATH 2.4.1.) (Rhodobacter sphaeroides), this protein is tRNA N6-adenosine threonylcarbamoyltransferase.